A 147-amino-acid polypeptide reads, in one-letter code: 3-dehydroquinate dehydratase (147 aa).

The active-site Proton acceptor is tyrosine 23. Asparagine 74, histidine 80, and aspartate 87 together coordinate substrate. The active-site Proton donor is the histidine 100. Residues 101–102 and arginine 111 contribute to the substrate site; that span reads LS.

The protein belongs to the type-II 3-dehydroquinase family. In terms of assembly, homododecamer.

It carries out the reaction 3-dehydroquinate = 3-dehydroshikimate + H2O. Its pathway is metabolic intermediate biosynthesis; chorismate biosynthesis; chorismate from D-erythrose 4-phosphate and phosphoenolpyruvate: step 3/7. Catalyzes a trans-dehydration via an enolate intermediate. The sequence is that of 3-dehydroquinate dehydratase from Clostridium botulinum (strain Loch Maree / Type A3).